We begin with the raw amino-acid sequence, 963 residues long: Phosphofurin acidic cluster sorting protein 1 (963 aa).

Residues 1–22 (MAERGGAGGGPGGAGGGSGQRG) are compositionally biased toward gly residues. Disordered stretches follow at residues 1–72 (MAER…SSST) and 78–97 (VAVASGSAPPGGPGPGRTPA). Ala2 is modified (N-acetylalanine). Ser28 carries the post-translational modification Phosphoserine. Phosphothreonine is present on Thr46. Positions 53–72 (ATSSSSSTSAAAASSSSSST) are enriched in low complexity. An involved in binding to AP-1 region spans residues 168 to 175 (ETELQLTF). Tyr251 is subject to Phosphotyrosine. Basic and acidic residues predominate over residues 262 to 273 (GIKSKLSDRSPD). 2 disordered regions span residues 262–299 (GIKSKLSDRSPDIDNYSEEEEESFSSEQEGSDDPLHGQ) and 377–428 (NPSD…GKDT). Over residues 276 to 293 (NYSEEEEESFSSEQEGSD) the composition is skewed to acidic residues. The stretch at 353-377 (HVSREQIREVEEDLDELYDSLEMYN) forms a coiled coil. 2 positions are modified to phosphoserine: Ser379 and Ser381. The span at 406–428 (MSQSSSQTEIGSLNSKGSLGKDT) shows a compositional bias: polar residues. Phosphoserine is present on residues Ser430 and Ser495. Disordered stretches follow at residues 476–542 (PEKV…HSTQ) and 760–804 (SPST…SMSS). Over residues 483–496 (MKSSKTDLQGSASP) the composition is skewed to polar residues. Thr504 is subject to Phosphothreonine. Phosphoserine occurs at positions 519, 528, 529, 531, and 534. Positions 770 to 804 (SPVVSLTVPSTSPPSSSGLSRDATATPPSSPSMSS) are enriched in low complexity.

Belongs to the PACS family. Associates with AP-1 and AP-3 but not with AP-2 complexes. Interacts with FURIN. Forms a ternary complex with FURIN and AP-1. Interacts with NPHP1; the interaction is dependent of NPHP1 phosphorylation by CK2. Interacts with PKD2 (via acidic region). Interacts with SORL1. Interacts with WDR37. As to quaternary structure, (Microbial infection) Interacts with HIV-1 Nef. In terms of assembly, (Microbial infection) Interacts with Epstein-barr virus protein BBLF1.

Its subcellular location is the golgi apparatus. It localises to the trans-Golgi network. Coat protein that is involved in the localization of trans-Golgi network (TGN) membrane proteins that contain acidic cluster sorting motifs. Controls the endosome-to-Golgi trafficking of furin and mannose-6-phosphate receptor by connecting the acidic-cluster-containing cytoplasmic domain of these molecules with the adapter-protein complex-1 (AP-1) of endosomal clathrin-coated membrane pits. Involved in HIV-1 nef-mediated removal of MHC-I from the cell surface to the TGN. Required for normal ER Ca2+ handling in lymphocytes. Together with WDR37, it plays an essential role in lymphocyte development, quiescence and survival. Required for stabilizing peripheral lymphocyte populations. The polypeptide is Phosphofurin acidic cluster sorting protein 1 (PACS1) (Homo sapiens (Human)).